Reading from the N-terminus, the 117-residue chain is Swarming motility protein SwrAA (117 aa).

It is found in the cytoplasm. Required for swarm cell differentiation. Plays a crucial role in regulating the degree of cell flagellation. The polypeptide is Swarming motility protein SwrAA (swrAA) (Bacillus subtilis (strain 168)).